The primary structure comprises 1293 residues: Late blight resistance protein R1-A (1293 aa).

2 coiled-coil regions span residues 423–446 (RYSD…ESLQ) and 538–560 (PRMN…KLLN). An NB-ARC domain is found at 539–826 (RMNEEIVGFE…SEAFIKSSEG (288 aa)). 572–579 (GMPGLGKT) serves as a coordination point for ATP. LRR repeat units lie at residues 876 to 899 (AEEN…VYSH), 956 to 981 (FKFL…VYLK), 1027 to 1049 (MVKL…LLEN), 1056 to 1079 (LETL…KTPN), 1102 to 1125 (PIRL…ISAP), 1149 to 1172 (LKHL…KVSN), 1175 to 1197 (FPQL…ADDA), 1198 to 1222 (FPNL…FMDI), and 1235 to 1259 (ESVV…NFKL).

It belongs to the disease resistance NB-LRR family.

The protein localises to the cytoplasm. It is found in the membrane. Its function is as follows. Confers resistance to late blight (Phytophthora infestans) races carrying the avirulence gene Avr1. Resistance proteins guard the plant against pathogens that contain an appropriate avirulence protein via an indirect interaction with this avirulence protein. That triggers a defense system including the hypersensitive response, which restricts the pathogen growth. The chain is Late blight resistance protein R1-A (R1A) from Solanum demissum (Wild potato).